The primary structure comprises 137 residues: Putative pre-16S rRNA nuclease (137 aa).

This sequence belongs to the YqgF nuclease family.

Its subcellular location is the cytoplasm. Its function is as follows. Could be a nuclease involved in processing of the 5'-end of pre-16S rRNA. The protein is Putative pre-16S rRNA nuclease of Clostridium perfringens (strain ATCC 13124 / DSM 756 / JCM 1290 / NCIMB 6125 / NCTC 8237 / Type A).